The sequence spans 95 residues: Small ribosomal subunit protein bS18 (95 aa).

It belongs to the bacterial ribosomal protein bS18 family. In terms of assembly, part of the 30S ribosomal subunit. Forms a tight heterodimer with protein bS6.

In terms of biological role, binds as a heterodimer with protein bS6 to the central domain of the 16S rRNA, where it helps stabilize the platform of the 30S subunit. In Acidiphilium cryptum (strain JF-5), this protein is Small ribosomal subunit protein bS18.